A 260-amino-acid chain; its full sequence is Snake venom serine protease homolog 2A (260 aa).

The signal sequence occupies residues 1–18 (MVLIRVLANLLILQLSYA). A propeptide spanning residues 19 to 24 (QKSSEL) is cleaved from the precursor. In terms of domain architecture, Peptidase S1 spans 25–251 (IIGGDECNIN…HLDWIKSIIA (227 aa)). Cystine bridges form between C31–C165, C52–C68, C100–C258, C144–C212, C176–C191, and C202–C227. N-linked (GlcNAc...) asparagine glycans are attached at residues N83, N123, and N124.

The protein belongs to the peptidase S1 family. Snake venom subfamily. In terms of tissue distribution, expressed by the venom gland.

It localises to the secreted. Snake venom serine protease homolog that may act in the hemostasis system of the prey. The protein is Snake venom serine protease homolog 2A (TLG2A) of Craspedocephalus gramineus (Bamboo pit viper).